The following is a 153-amino-acid chain: Ribosome maturation factor RimP (153 aa).

Belongs to the RimP family.

It localises to the cytoplasm. Functionally, required for maturation of 30S ribosomal subunits. This Clostridium botulinum (strain Alaska E43 / Type E3) protein is Ribosome maturation factor RimP.